Reading from the N-terminus, the 351-residue chain is Tropomodulin-2 (351 aa).

Ser-25 bears the Phosphoserine mark.

Belongs to the tropomodulin family. As to quaternary structure, binds to the N-terminus of tropomyosin and to actin. In terms of tissue distribution, neuronal-tissue specific.

It is found in the cytoplasm. The protein localises to the cytoskeleton. Blocks the elongation and depolymerization of the actin filaments at the pointed end. The Tmod/TM complex contributes to the formation of the short actin protofilament, which in turn defines the geometry of the membrane skeleton. This is Tropomodulin-2 (Tmod2) from Mus musculus (Mouse).